A 313-amino-acid chain; its full sequence is Acetyl-coenzyme A carboxylase carboxyl transferase subunit alpha (313 aa).

Positions 30-291 (DLDREISDLE…KMALLQELAF (262 aa)) constitute a CoA carboxyltransferase C-terminal domain.

The protein belongs to the AccA family. Acetyl-CoA carboxylase is a heterohexamer composed of biotin carboxyl carrier protein (AccB), biotin carboxylase (AccC) and two subunits each of ACCase subunit alpha (AccA) and ACCase subunit beta (AccD).

It localises to the cytoplasm. The catalysed reaction is N(6)-carboxybiotinyl-L-lysyl-[protein] + acetyl-CoA = N(6)-biotinyl-L-lysyl-[protein] + malonyl-CoA. Its pathway is lipid metabolism; malonyl-CoA biosynthesis; malonyl-CoA from acetyl-CoA: step 1/1. In terms of biological role, component of the acetyl coenzyme A carboxylase (ACC) complex. First, biotin carboxylase catalyzes the carboxylation of biotin on its carrier protein (BCCP) and then the CO(2) group is transferred by the carboxyltransferase to acetyl-CoA to form malonyl-CoA. The protein is Acetyl-coenzyme A carboxylase carboxyl transferase subunit alpha of Zymomonas mobilis subsp. mobilis (strain ATCC 31821 / ZM4 / CP4).